The following is a 916-amino-acid chain: DNA mismatch repair protein MutS (916 aa).

Residue 665–672 (GPNMAGKS) participates in ATP binding.

It belongs to the DNA mismatch repair MutS family.

Its function is as follows. This protein is involved in the repair of mismatches in DNA. It is possible that it carries out the mismatch recognition step. This protein has a weak ATPase activity. The protein is DNA mismatch repair protein MutS of Bradyrhizobium sp. (strain ORS 278).